Reading from the N-terminus, the 263-residue chain is 4-hydroxy-tetrahydrodipicolinate reductase (263 aa).

NAD(+)-binding positions include 8-13, aspartate 34, 99-101, and 125-128; these read GASGRM, GTT, and SPNY. Histidine 157 functions as the Proton donor/acceptor in the catalytic mechanism. Histidine 158 is a binding site for (S)-2,3,4,5-tetrahydrodipicolinate. Residue lysine 161 is the Proton donor of the active site. 167 to 168 contacts (S)-2,3,4,5-tetrahydrodipicolinate; sequence GT.

The protein belongs to the DapB family.

The protein localises to the cytoplasm. The catalysed reaction is (S)-2,3,4,5-tetrahydrodipicolinate + NAD(+) + H2O = (2S,4S)-4-hydroxy-2,3,4,5-tetrahydrodipicolinate + NADH + H(+). It carries out the reaction (S)-2,3,4,5-tetrahydrodipicolinate + NADP(+) + H2O = (2S,4S)-4-hydroxy-2,3,4,5-tetrahydrodipicolinate + NADPH + H(+). Its pathway is amino-acid biosynthesis; L-lysine biosynthesis via DAP pathway; (S)-tetrahydrodipicolinate from L-aspartate: step 4/4. Catalyzes the conversion of 4-hydroxy-tetrahydrodipicolinate (HTPA) to tetrahydrodipicolinate. This chain is 4-hydroxy-tetrahydrodipicolinate reductase, found in Methanococcoides burtonii (strain DSM 6242 / NBRC 107633 / OCM 468 / ACE-M).